A 388-amino-acid chain; its full sequence is Probable acetyl-CoA acetyltransferase (388 aa).

The active-site Acyl-thioester intermediate is Cys84. An Isoglutamyl lysine isopeptide (Lys-Gln) (interchain with Q-Cter in protein Pup) cross-link involves residue Lys187. Catalysis depends on proton acceptor residues His345 and Cys375.

This sequence belongs to the thiolase-like superfamily. Thiolase family.

It carries out the reaction 2 acetyl-CoA = acetoacetyl-CoA + CoA. This chain is Probable acetyl-CoA acetyltransferase, found in Mycolicibacterium smegmatis (strain ATCC 700084 / mc(2)155) (Mycobacterium smegmatis).